Reading from the N-terminus, the 357-residue chain is 4-hydroxymandelate synthase (357 aa).

VOC domains are found at residues 5-129 (EIDY…LIQR) and 158-309 (GIDH…IFTA). Residue H161 coordinates Fe cation. Substrate-binding residues include H161, S201, T214, H241, and Q305. H241 provides a ligand contact to Fe cation. E320 lines the Fe cation pocket.

The protein belongs to the 4HPPD family. As to quaternary structure, monomer. Fe cation serves as cofactor.

The catalysed reaction is 3-(4-hydroxyphenyl)pyruvate + O2 = (S)-4-hydroxymandelate + CO2. It participates in antibiotic biosynthesis; vancomycin biosynthesis. Required to synthesize hydroxyphenylglycine, a recurring skeletal component of nonproteinogenic macrocyclic peptide antibiotics such as vancomycin. Catalyzes the conversion of p-hydroxyphenylpyruvate to p-hydroxymandelate. The decarboxylation and hydroxylation activities of HmaS show novel and distinct regioselectivity, compared to all other known p-hydroxyphenylpyruvate dioxygenases, by hydroxylating the benzylic position of the substrate instead of the phenyl ring. This chain is 4-hydroxymandelate synthase, found in Amycolatopsis orientalis (Nocardia orientalis).